The following is a 119-amino-acid chain: NAD(P)H-quinone oxidoreductase subunit M (119 aa).

It belongs to the complex I NdhM subunit family. As to quaternary structure, NDH-1 can be composed of about 15 different subunits; different subcomplexes with different compositions have been identified which probably have different functions.

The protein localises to the cell inner membrane. It catalyses the reaction a plastoquinone + NADH + (n+1) H(+)(in) = a plastoquinol + NAD(+) + n H(+)(out). The catalysed reaction is a plastoquinone + NADPH + (n+1) H(+)(in) = a plastoquinol + NADP(+) + n H(+)(out). In terms of biological role, NDH-1 shuttles electrons from an unknown electron donor, via FMN and iron-sulfur (Fe-S) centers, to quinones in the respiratory and/or the photosynthetic chain. The immediate electron acceptor for the enzyme in this species is believed to be plastoquinone. Couples the redox reaction to proton translocation, and thus conserves the redox energy in a proton gradient. Cyanobacterial NDH-1 also plays a role in inorganic carbon-concentration. This chain is NAD(P)H-quinone oxidoreductase subunit M, found in Gloeobacter violaceus (strain ATCC 29082 / PCC 7421).